The sequence spans 161 residues: Insulin-like growth factor 1, juvenile form (161 aa).

Residues 45–73 (GPETLCGAELVDTLQFVCGDRGFYFSKPT) form a b region. Intrachain disulfides connect cysteine 50–cysteine 92, cysteine 62–cysteine 105, and cysteine 91–cysteine 96. The tract at residues 74–85 (GYGPSSRRSHNR) is c. Positions 86–106 (GIVDECCFQSCELRRLEMYCA) are a. The segment at 107 to 114 (PVKPGKTP) is d. The interval 111–161 (GKTPRSVRAQRHTDSPRTAKKPLPGQSHSSYKEVHQKNSSRGNTGGRNYRI) is disordered. The propeptide at 115–161 (RSVRAQRHTDSPRTAKKPLPGQSHSSYKEVHQKNSSRGNTGGRNYRI) is e peptide.

The protein belongs to the insulin family.

The protein localises to the secreted. Its function is as follows. The insulin-like growth factors, isolated from plasma, are structurally and functionally related to insulin but have a much higher growth-promoting activity. Acts as a ligand for IGF1R. Binds to the alpha subunit of IGF1R, leading to the activation of the intrinsic tyrosine kinase activity which autophosphorylates tyrosine residues in the beta subunit thus initiatiating a cascade of down-stream signaling events leading to activation of the PI3K-AKT/PKB and the Ras-MAPK pathways. Binds to integrins. Its binding to integrins and subsequent ternary complex formation with integrins and IGFR1 are essential for IGF1 signaling. The sequence is that of Insulin-like growth factor 1, juvenile form from Cyprinus carpio (Common carp).